A 200-amino-acid polypeptide reads, in one-letter code: Pyridoxal 5'-phosphate synthase subunit PdxT (200 aa).

52-54 (GES) provides a ligand contact to L-glutamine. Catalysis depends on cysteine 84, which acts as the Nucleophile. L-glutamine contacts are provided by residues arginine 116 and 145–146 (IR). Residues histidine 181 and glutamate 183 each act as charge relay system in the active site.

It belongs to the glutaminase PdxT/SNO family. In the presence of PdxS, forms a dodecamer of heterodimers. Only shows activity in the heterodimer.

It carries out the reaction aldehydo-D-ribose 5-phosphate + D-glyceraldehyde 3-phosphate + L-glutamine = pyridoxal 5'-phosphate + L-glutamate + phosphate + 3 H2O + H(+). It catalyses the reaction L-glutamine + H2O = L-glutamate + NH4(+). Its pathway is cofactor biosynthesis; pyridoxal 5'-phosphate biosynthesis. In terms of biological role, catalyzes the hydrolysis of glutamine to glutamate and ammonia as part of the biosynthesis of pyridoxal 5'-phosphate. The resulting ammonia molecule is channeled to the active site of PdxS. The protein is Pyridoxal 5'-phosphate synthase subunit PdxT of Saccharolobus islandicus (strain Y.G.57.14 / Yellowstone #1) (Sulfolobus islandicus).